The following is a 207-amino-acid chain: Ribosomal RNA small subunit methyltransferase G (207 aa).

Residues Gly74, Phe79, 124–125 (VE), and Arg138 each bind S-adenosyl-L-methionine.

This sequence belongs to the methyltransferase superfamily. RNA methyltransferase RsmG family.

It localises to the cytoplasm. It catalyses the reaction guanosine(527) in 16S rRNA + S-adenosyl-L-methionine = N(7)-methylguanosine(527) in 16S rRNA + S-adenosyl-L-homocysteine. Functionally, specifically methylates the N7 position of guanine in position 527 of 16S rRNA. This Hyphomonas neptunium (strain ATCC 15444) protein is Ribosomal RNA small subunit methyltransferase G.